A 338-amino-acid chain; its full sequence is MIELHQVSKSFNVNGKTVEAVKNVSITVEKGEIFGVVGYSGAGKSTLVRCINLLERPDAGQVVIDGKNLSTLSSKELRVARRKIGMIFQGYNLLKTATVYDNIAKPLKLEGVPKNEIETRVNKYLSIVGLEDKRNNYPSQLSGGQKQRVAIARALAHEPEILLSDEATSALDPETTEAILQLLLKINAELGITIFLITHELDVIQRICDRVAVMENGHLVEQGTVLDIFTKAKHATTKRFVGSEASFDIPQDLLEKYVATGKLVSLHFIGDEADEPALALVSRKFDVLPSILAGGIDHLKNGTLGKLLVHLKGDEVEYSKAISYLKESGVVVEEVELL.

Residues 2-241 (IELHQVSKSF…AKHATTKRFV (240 aa)) enclose the ABC transporter domain. Position 38–45 (38–45 (GYSGAGKS)) interacts with ATP.

Belongs to the ABC transporter superfamily. Methionine importer (TC 3.A.1.24) family. As to quaternary structure, the complex is composed of two ATP-binding proteins (MetN), two transmembrane proteins (MetI) and a solute-binding protein (MetQ).

Its subcellular location is the cell membrane. It catalyses the reaction L-methionine(out) + ATP + H2O = L-methionine(in) + ADP + phosphate + H(+). The enzyme catalyses D-methionine(out) + ATP + H2O = D-methionine(in) + ADP + phosphate + H(+). In terms of biological role, part of the ABC transporter complex MetNIQ involved in methionine import. Responsible for energy coupling to the transport system. This Listeria monocytogenes serovar 1/2a (strain ATCC BAA-679 / EGD-e) protein is Methionine import ATP-binding protein MetN 1.